Here is a 575-residue protein sequence, read N- to C-terminus: U3 small nucleolar RNA-associated protein 9 (575 aa).

Basic and acidic residues-rich tracts occupy residues 340 to 355 (NEKN…KLEE) and 364 to 375 (VQHEKKETETKI). The interval 340-375 (NEKNNADEADQKKLEEKEEEAQPEVQHEKKETETKI) is disordered. Phosphoserine occurs at positions 547 and 564.

Interacts with snoRNA U3. Interacts with MPP10. Component of the ribosomal small subunit (SSU) processome composed of at least 40 protein subunits and snoRNA U3. In the absence of snoRNA3, forms a complex with other t-UTPs. This complex can associate with pre-18S ribosomal RNAs.

The protein resides in the nucleus. It localises to the nucleolus. Functionally, involved in nucleolar processing of pre-18S ribosomal RNA. Required for optimal pre-ribosomal RNA transcription by RNA polymerase I together with a subset of U3 proteins required for transcription (t-UTPs). The polypeptide is U3 small nucleolar RNA-associated protein 9 (UTP9) (Saccharomyces cerevisiae (strain ATCC 204508 / S288c) (Baker's yeast)).